The sequence spans 201 residues: MPQAVAGPEIERLIQLLARMPGLGPRSARRAALQLIKKRDTLLGPLADAMRVAADRIVVCTSCGNVDTSDPCTICRDAERDPTTLVVVEDVSDLWALERSGAVKARYHVLGGVLSALDGVRPEHLNLASLVERVARPEVTEVILALNATVDGQTTAHYVTESIRHCDVKVTRLAHGVPVGGELDYLDEGTLSAAIRSRTAF.

The segment at 60–75 (CTSCGNVDTSDPCTIC) adopts a C4-type zinc-finger fold. One can recognise a Toprim domain in the interval 83–178 (TTLVVVEDVS…KVTRLAHGVP (96 aa)).

The protein belongs to the RecR family.

Its function is as follows. May play a role in DNA repair. It seems to be involved in an RecBC-independent recombinational process of DNA repair. It may act with RecF and RecO. The chain is Recombination protein RecR from Methylobacterium radiotolerans (strain ATCC 27329 / DSM 1819 / JCM 2831 / NBRC 15690 / NCIMB 10815 / 0-1).